The primary structure comprises 1097 residues: DNA-directed RNA polymerase subunit beta (1097 aa).

A disordered region spans residues 1072 to 1097 (QDVNPRRSTPSRPTYESLGVADYDED).

It belongs to the RNA polymerase beta chain family. As to quaternary structure, in cyanobacteria the RNAP catalytic core is composed of 2 alpha, 1 beta, 1 beta', 1 gamma and 1 omega subunit. When a sigma factor is associated with the core the holoenzyme is formed, which can initiate transcription.

The catalysed reaction is RNA(n) + a ribonucleoside 5'-triphosphate = RNA(n+1) + diphosphate. Its function is as follows. DNA-dependent RNA polymerase catalyzes the transcription of DNA into RNA using the four ribonucleoside triphosphates as substrates. The protein is DNA-directed RNA polymerase subunit beta of Synechococcus sp. (strain CC9605).